The sequence spans 1416 residues: 1-phosphatidylinositol 4,5-bisphosphate phosphodiesterase eta-2 (1416 aa).

The segment at 1–155 (MSGPWPSPDS…WVTGLRYLMA (155 aa)) is necessary for plasma membrane localization. Positions 47-155 (GAMQEGMQMV…WVTGLRYLMA (109 aa)) constitute a PH domain. 2 consecutive EF-hand domains span residues 169–204 (TRDQ…LNVN) and 205–241 (LPRQ…MSTR). Ca(2+)-binding residues include aspartate 182, asparagine 184, aspartate 186, serine 188, and glutamate 193. Residues 326–471 (QDMTQPLSHY…LKGKILVKGK (146 aa)) enclose the PI-PLC X-box domain. The active site involves histidine 341. Ca(2+) is bound by residues asparagine 342, glutamate 371, and aspartate 373. Histidine 385 is an active-site residue. Residue glutamate 420 participates in Ca(2+) binding. Substrate contacts are provided by lysine 469 and lysine 471. Serine 487 and serine 491 each carry phosphoserine. The tract at residues 535-620 (DPNNFSVSTL…RGATRQKKTM (86 aa)) is disordered. The span at 537-546 (NNFSVSTLSP) shows a compositional bias: polar residues. The segment covering 581–592 (SRRKKKGSKLKK) has biased composition (basic residues). Residues serine 595 and serine 605 each carry the phosphoserine modification. The 115-residue stretch at 626–740 (LSDLVKYTKS…GYVLKPGCMC (115 aa)) folds into the PI-PLC Y-box domain. Substrate is bound by residues serine 653 and arginine 680. In terms of domain architecture, C2 spans 740 to 869 (CQGVFNPNSE…PGYRHVYLEG (130 aa)). Residues isoleucine 784, aspartate 786, aspartate 810, aspartate 839, histidine 840, and aspartate 841 each coordinate Ca(2+). Disordered regions lie at residues 905–1109 (GSLD…GGWR), 1121–1222 (YSDA…LQPR), and 1315–1405 (ITSP…GPAS). The span at 1011 to 1021 (APGPGPPPPAA) shows a compositional bias: pro residues. The segment covering 1073 to 1083 (GSQTDGRSQPR) has biased composition (polar residues). A compositionally biased stretch (low complexity) spans 1143–1166 (VSSSSSMSSSDTVIDLSLPSLGLG). The segment covering 1199–1208 (KSKSNPNLRA) has biased composition (polar residues). Residues 1324–1333 (AGEGVAGGPG) are compositionally biased toward gly residues.

It depends on Ca(2+) as a cofactor. As to expression, expressed in retina and kidney.

It localises to the cytoplasm. It is found in the cell membrane. The enzyme catalyses a 1,2-diacyl-sn-glycero-3-phospho-(1D-myo-inositol-4,5-bisphosphate) + H2O = 1D-myo-inositol 1,4,5-trisphosphate + a 1,2-diacyl-sn-glycerol + H(+). With respect to regulation, activity is stimulated by GNB1:GNG2. In terms of biological role, the production of the second messenger molecules diacylglycerol (DAG) and inositol 1,4,5-trisphosphate (IP3) is mediated by activated phosphatidylinositol-specific phospholipase C enzymes. This phospholipase activity is very sensitive to calcium. May be important for formation and maintenance of the neuronal network in the postnatal brain. The polypeptide is 1-phosphatidylinositol 4,5-bisphosphate phosphodiesterase eta-2 (Homo sapiens (Human)).